A 178-amino-acid chain; its full sequence is 3-isopropylmalate dehydratase small subunit (178 aa).

The protein belongs to the LeuD family. LeuD type 1 subfamily. As to quaternary structure, heterodimer of LeuC and LeuD.

The enzyme catalyses (2R,3S)-3-isopropylmalate = (2S)-2-isopropylmalate. It participates in amino-acid biosynthesis; L-leucine biosynthesis; L-leucine from 3-methyl-2-oxobutanoate: step 2/4. Its function is as follows. Catalyzes the isomerization between 2-isopropylmalate and 3-isopropylmalate, via the formation of 2-isopropylmaleate. The polypeptide is 3-isopropylmalate dehydratase small subunit (leuD) (Paenibacillus polymyxa (Bacillus polymyxa)).